Here is a 709-residue protein sequence, read N- to C-terminus: PP2C-like domain-containing protein CG9801 (709 aa).

Disordered stretches follow at residues 121–222 (DCYG…NSER), 503–530 (LHPS…SRPK), and 678–709 (GGGE…ETNF). The segment covering 130 to 143 (PPVQVATQNSTRLT) has biased composition (polar residues). The span at 182–196 (ANLAAASAGTDAGKA) shows a compositional bias: low complexity. Polar residues predominate over residues 197 to 217 (NSDQNNRNVLNAKTEVSTDGD). The PPM-type phosphatase domain maps to 259-503 (SVSLYETNML…KSASAIYARL (245 aa)).

In Drosophila melanogaster (Fruit fly), this protein is PP2C-like domain-containing protein CG9801.